The following is a 301-amino-acid chain: UstYa family oxidase phomYd (301 aa).

Residues 1-26 (MEKFFSPSRHNYADLSPTDVPASEES) are disordered. Residues 47–69 (VLVNRLLAASTVALVMVSLWLGW) traverse the membrane as a helical segment. Short sequence motifs (HXXHC) lie at residues 189 to 194 (THSVHC) and 218 to 222 (HTDHC). Residue asparagine 275 is glycosylated (N-linked (GlcNAc...) asparagine).

This sequence belongs to the ustYa family.

It is found in the membrane. It participates in mycotoxin biosynthesis. UstYa family oxidase; part of the gene cluster that mediates the biosynthesis of the phomopsins, a group of hexapeptide mycotoxins which infects lupins and causes lupinosis disease in livestock. Within the pathway, phomYd catalyzes the desaturation of the Asp moiety into 2,3-dehydroaspartic acid (dAsp). The pathway starts with the processing of the precursor phomA by several endopeptidases including kexin proteases as well as the cluster-specific S41 family peptidase phomP1 and the oligopeptidase phomG to produce 10 identical copies of the hexapeptide Tyr-Val-Ile-Pro-Ile-Asp. After being excised from the precursor peptide, the core peptides are cyclized and modified post-translationally by enzymes encoded within the gene cluster. The timing and order of proteolysis of the phomA precursor and PTMs are still unknown. Two tyrosinase-like enzymes, phomQ1 and phomQ2, catalyze the chlorination and hydroxylation of Tyr, respectively. PhomYb, is proposed to be involved in the construction of the macrocyclic structure. The other 4 ustYa family proteins may be involved in PTMs that generate the unique structure of phomopsin A. PhomYa is required for the hydroxylation of C-beta of Tyr. PhomYc, phomYd, and phomYe are responsible for the biosynthesis of 2,3-dehydroisoleucine (dIle), 2,3-dehydroaspartic acid (dAsp), and 3,4-dehydroproline (dPro), respectively. While dIle formation by phomYc is indispensable for the installation of dAsp by phomYd, the order of the other PTMs have not been elucidated yet. Most of the biosynthetic enzymes likely have broad substrate specificity, and thus, there might be a metabolic grid from a precursor to phomopsin A. The enzyme(s) responsible for the biosynthesis of 3,4-dehydrovaline (dVal) have also not been identified yet. Finally, phomM acts as an S-adenosylmethionine-dependent alpha-N-methyltransferase that catalyzes two successive N-methylation reactions, converting N-desmethyl-phomopsin A to phomopsin A and phomopsin A further to an N,N-dimethylated congener called phomopsin E. This is UstYa family oxidase phomYd from Diaporthe leptostromiformis (Lupinosis disease fungus).